Reading from the N-terminus, the 158-residue chain is SsrA-binding protein (158 aa).

Basic and acidic residues predominate over residues 133-148 (KAQDKRETSAKRDWNR). The interval 133-158 (KAQDKRETSAKRDWNRQKARLLKQNG) is disordered. Positions 149–158 (QKARLLKQNG) are enriched in basic residues.

The protein belongs to the SmpB family.

Its subcellular location is the cytoplasm. Functionally, required for rescue of stalled ribosomes mediated by trans-translation. Binds to transfer-messenger RNA (tmRNA), required for stable association of tmRNA with ribosomes. tmRNA and SmpB together mimic tRNA shape, replacing the anticodon stem-loop with SmpB. tmRNA is encoded by the ssrA gene; the 2 termini fold to resemble tRNA(Ala) and it encodes a 'tag peptide', a short internal open reading frame. During trans-translation Ala-aminoacylated tmRNA acts like a tRNA, entering the A-site of stalled ribosomes, displacing the stalled mRNA. The ribosome then switches to translate the ORF on the tmRNA; the nascent peptide is terminated with the 'tag peptide' encoded by the tmRNA and targeted for degradation. The ribosome is freed to recommence translation, which seems to be the essential function of trans-translation. The polypeptide is SsrA-binding protein (Jannaschia sp. (strain CCS1)).